The following is a 981-amino-acid chain: MAGKARVHELAKELGVTSKELLATLKEQGEFVKSASSTVEAPVARRLRESFPSAGGAETKSETGAAAPAARPAAKPGAPSPSAAKPGGPRPGPKPAAPAPAAPAAPAPAAPAAPAAAAPAAPSAPVPTPTFNAPKPAQPARPAPAAPAASAPAAPAAPAAPSTGAKPGGPRPGPKAPRVGNNPYSSAPAERPAPRPAPGAPRPGAGQGGSRPAPGQGGPRPAPGQGGPRPAPGQGGPRPAPGQGGPRPPAGQGGPRPSPGSMPPRPNPGAMPARSARPAPGGGGRPGRPGGAPGGRPGGGGGGYRGGGAPGAGAGAGAPGGAAPAGGFRGRPGGGGRPGQRGAAAGAFGRPGGAVRRGRKSKRAKRAEYESMQAPAVGGVRLPRGNGETIRLARGASLSDFADKIDANPAALVQALFNLGEMVTATQSVNDETLELLGGEMNYVVQVVSPEDEDRELLDSFDLTYGEDAGGEEDLESRPPVVTVMGHVDHGKTRLLDVIRKANVREGEAGGITQHIGAYQVLTELEGNERLVTFIDTPGHEAFTAMRARGAKATDLAILVVAADDGVMPQTVEAINHAQAADVPIVVAVNKIDKEGANPDKIRQQLTEYGLVAEEYGGDTMFVDISAKQGLNIDALLEAVLLTADASLDLRANPDMDAQGVAIEAHLDRGRGPVATVLIQRGTLRVGDSIVAGDAYGRVRRMVDEHGQDVHEALPSRPVQVIGFTSVPGAGDNLLVVDEDRIARQIADRRNARKRNALAAKSRKRISLDDLDAALKEHSQLNLILKGDNSGTVEALEEALLGIPIDDEVQLRVIDRGVGGITETNVNLAAASNAIIIGFNVRAEGKATELANREGVDIRYYSVIYQAIDEVEKALKGLLKPVYEEVELGKAEIRAMFRSSKIGNIAGCLVTSGSIRRNAKARLIRDSKVIAETVTISSLKREKEDATEVREGYECGLTVTYSDIKIGDVLECYELREKPRD.

Positions 31 to 370 (FVKSASSTVE…SKRAKRAEYE (340 aa)) are disordered. Low complexity predominate over residues 64 to 87 (GAAAPAARPAAKPGAPSPSAAKPG). Pro residues predominate over residues 88–111 (GPRPGPKPAAPAPAAPAAPAPAAP). Low complexity predominate over residues 112–121 (AAPAAAAPAA). Positions 136–145 (PAQPARPAPA) are enriched in pro residues. The segment covering 146–165 (APAASAPAAPAAPAAPSTGA) has biased composition (low complexity). Over residues 256–269 (RPSPGSMPPRPNPG) the composition is skewed to pro residues. The segment covering 270–279 (AMPARSARPA) has biased composition (low complexity). The span at 280 to 339 (PGGGGRPGRPGGAPGGRPGGGGGGYRGGGAPGAGAGAGAPGGAAPAGGFRGRPGGGGRPG) shows a compositional bias: gly residues. Basic residues predominate over residues 356-365 (RRGRKSKRAK). In terms of domain architecture, tr-type G spans 477 to 649 (SRPPVVTVMG…VLLTADASLD (173 aa)). A G1 region spans residues 486-493 (GHVDHGKT). 486-493 (GHVDHGKT) lines the GTP pocket. The tract at residues 511-515 (GITQH) is G2. Residues 536–539 (DTPG) form a G3 region. GTP contacts are provided by residues 536-540 (DTPGH) and 590-593 (NKID). Positions 590 to 593 (NKID) are G4. Positions 626-628 (SAK) are G5.

This sequence belongs to the TRAFAC class translation factor GTPase superfamily. Classic translation factor GTPase family. IF-2 subfamily.

The protein localises to the cytoplasm. Its function is as follows. One of the essential components for the initiation of protein synthesis. Protects formylmethionyl-tRNA from spontaneous hydrolysis and promotes its binding to the 30S ribosomal subunits. Also involved in the hydrolysis of GTP during the formation of the 70S ribosomal complex. The sequence is that of Translation initiation factor IF-2 from Rhodococcus erythropolis (strain PR4 / NBRC 100887).